Consider the following 326-residue polypeptide: MATH domain and coiled-coil domain-containing protein At3g58370 (326 aa).

Positions 7–133 (DNKFTWVIKN…NGEVKIVVEI (127 aa)) constitute an MATH domain. Residues 259 to 312 (LRLDWLEKKLAEVKAKKKKVETGKARLQRAEEELQKLNQKCLELKAFLEKENAD) are a coiled coil.

The sequence is that of MATH domain and coiled-coil domain-containing protein At3g58370 from Arabidopsis thaliana (Mouse-ear cress).